A 443-amino-acid polypeptide reads, in one-letter code: D(2) dopamine receptor (443 aa).

Over 1–37 (MDPLNLSWYDDDPESRNWSRPFNGSEGKVGKPHYNYY) the chain is Extracellular. N-linked (GlcNAc...) asparagine glycans are attached at residues N5, N17, and N23. A helical transmembrane segment spans residues 38–60 (AMLLTLLIFVIVFGNVLVCMAVS). Residues 61–70 (REKALQTTTN) lie on the Cytoplasmic side of the membrane. The helical transmembrane segment at 71-93 (YLIVSLAVADLLVATLVMPWVVY) threads the bilayer. The Extracellular portion of the chain corresponds to 94–108 (LEVVGEWKFSRIHCD). C107 and C182 are joined by a disulfide. The helical transmembrane segment at 109–130 (IFVTLDVMMCTASILNLCAISI) threads the bilayer. Residues 131–151 (DRYTAVAMPMLYNTRYSSKRR) lie on the Cytoplasmic side of the membrane. A helical transmembrane segment spans residues 152 to 172 (VTVMIAIVWVLSFTISCPLLF). The Extracellular portion of the chain corresponds to 173 to 188 (GLNNTDQNECIIANPA). A helical membrane pass occupies residues 189–213 (FVVYSSVVSFYVPFIVTLLVYIKIY). Residues 211 to 373 (KIYIVLRRRR…SQQKEKKATQ (163 aa)) form an interaction with PPP1R9B region. The Cytoplasmic portion of the chain corresponds to 214 to 373 (IVLRRRRKRV…SQQKEKKATQ (160 aa)). Residues 282–331 (EMLSSTSPPERTRYSPIPPSHHQLTLPDPSHHGLHSTANSPVKPEKNGHA) are disordered. A helical transmembrane segment spans residues 374 to 395 (MLAIVLGVFIICWLPFFITHIL). At 396 to 409 (NIHCDCNIPPVLYS) the chain is on the extracellular side. An intrachain disulfide couples C399 to C401. The chain crosses the membrane as a helical span at residues 410–431 (AFTWLGYVNSAVNPIIYTTFNV). At 432–443 (EFRKAFMKILHC) the chain is on the cytoplasmic side. Residue C443 is the site of S-palmitoyl cysteine attachment.

It belongs to the G-protein coupled receptor 1 family. In terms of assembly, forms homo- and heterooligomers with DRD4. The interaction with DRD4 may modulate agonist-induced downstream signaling. Interacts with CADPS and CADPS2. Interacts with GPRASP1, PPP1R9B and CLIC6. Interacts with ARRB2. Interacts with HTR2A. Interacts with DRD1. Interacts with KCNA2. Palmitoylated. Palmitoylation which is required for proper localization to the plasma membrane and stability of the receptor could be carried on by ZDHHC4, ZDHHC3 and ZDHHC8.

It localises to the cell membrane. It is found in the golgi apparatus membrane. In terms of biological role, dopamine receptor whose activity is mediated by G proteins which inhibit adenylyl cyclase. Positively regulates postnatal regression of retinal hyaloid vessels via suppression of VEGFR2/KDR activity, downstream of OPN5. In Mustela putorius furo (European domestic ferret), this protein is D(2) dopamine receptor (DRD2).